Reading from the N-terminus, the 962-residue chain is Glycine dehydrogenase (decarboxylating) (962 aa).

K709 bears the N6-(pyridoxal phosphate)lysine mark.

Belongs to the GcvP family. The glycine cleavage system is composed of four proteins: P, T, L and H. The cofactor is pyridoxal 5'-phosphate.

It carries out the reaction N(6)-[(R)-lipoyl]-L-lysyl-[glycine-cleavage complex H protein] + glycine + H(+) = N(6)-[(R)-S(8)-aminomethyldihydrolipoyl]-L-lysyl-[glycine-cleavage complex H protein] + CO2. Functionally, the glycine cleavage system catalyzes the degradation of glycine. The P protein binds the alpha-amino group of glycine through its pyridoxal phosphate cofactor; CO(2) is released and the remaining methylamine moiety is then transferred to the lipoamide cofactor of the H protein. This Shewanella oneidensis (strain ATCC 700550 / JCM 31522 / CIP 106686 / LMG 19005 / NCIMB 14063 / MR-1) protein is Glycine dehydrogenase (decarboxylating).